Reading from the N-terminus, the 138-residue chain is Gap junction alpha-4 protein (138 aa).

Topologically, residues 1–16 are cytoplasmic; that stretch reads DWGFLEKLLDQVQEHS. A helical transmembrane segment spans residues 17–39; that stretch reads TVVGKIWLTVLFIFRILILGLAG. The Extracellular portion of the chain corresponds to 40–74; the sequence is ESVWGDEQSDFECNTAQPGCTNVCYDQAFPISHIP. Residues 75–97 traverse the membrane as a helical segment; it reads YWVLQFLFVSTPTLVYLGHVIYL. Residues 98–138 lie on the Cytoplasmic side of the membrane; sequence SRREERLRQKEGELRALPDKDPRVERALAGIERQMAKISVA.

Belongs to the connexin family. Alpha-type (group II) subfamily. As to quaternary structure, a connexon is composed of a hexamer of connexins.

It localises to the cell membrane. It is found in the cell junction. The protein localises to the gap junction. In terms of biological role, one gap junction consists of a cluster of closely packed pairs of transmembrane channels, the connexons, through which materials of low MW diffuse from one cell to a neighboring cell. This Sus scrofa (Pig) protein is Gap junction alpha-4 protein (GJA4).